A 348-amino-acid polypeptide reads, in one-letter code: Major outer membrane protein (348 aa).

The N-terminal stretch at 1–20 (MKKTIVALAVAAVAATSANA) is a signal peptide.

Disulfide bond interactions within and between MOMP molecules and other components form high molecular-weight oligomers.

It is found in the cell outer membrane. Its function is as follows. Structural rigidity of the outer membrane of elementary bodies and porin forming, permitting diffusion of solutes through the intracellular reticulate body membrane. The chain is Major outer membrane protein (ompH) from Pasteurella multocida (strain Pm70).